Consider the following 202-residue polypeptide: ATP-dependent Clp protease proteolytic subunit (202 aa).

S106 (nucleophile) is an active-site residue. Residue H131 is part of the active site.

Belongs to the peptidase S14 family. In terms of assembly, fourteen ClpP subunits assemble into 2 heptameric rings which stack back to back to give a disk-like structure with a central cavity, resembling the structure of eukaryotic proteasomes.

Its subcellular location is the cytoplasm. The enzyme catalyses Hydrolysis of proteins to small peptides in the presence of ATP and magnesium. alpha-casein is the usual test substrate. In the absence of ATP, only oligopeptides shorter than five residues are hydrolyzed (such as succinyl-Leu-Tyr-|-NHMec, and Leu-Tyr-Leu-|-Tyr-Trp, in which cleavage of the -Tyr-|-Leu- and -Tyr-|-Trp bonds also occurs).. Its function is as follows. Cleaves peptides in various proteins in a process that requires ATP hydrolysis. Has a chymotrypsin-like activity. Plays a major role in the degradation of misfolded proteins. This is ATP-dependent Clp protease proteolytic subunit from Shewanella oneidensis (strain ATCC 700550 / JCM 31522 / CIP 106686 / LMG 19005 / NCIMB 14063 / MR-1).